A 408-amino-acid polypeptide reads, in one-letter code: CinA-like protein (408 aa).

This sequence belongs to the CinA family.

This Fervidobacterium nodosum (strain ATCC 35602 / DSM 5306 / Rt17-B1) protein is CinA-like protein.